The chain runs to 584 residues: Sperm-associated microtubule inner protein 4 (584 aa).

The protein localises to the cytoplasm. Its subcellular location is the cytoskeleton. The protein resides in the microtubule organizing center. It localises to the centrosome. It is found in the flagellum axoneme. Microtubule inner protein (MIP) part of the dynein-decorated doublet microtubules (DMTs) in flagellum axoneme. May serve to reinforce and thus stabilize the microtubule structure in the sperm flagella. In Bos taurus (Bovine), this protein is Sperm-associated microtubule inner protein 4 (SPMIP4).